A 154-amino-acid polypeptide reads, in one-letter code: MRGTGTHLIAKNRKAFFNYHVEDRLECGIALEGTEVKSVRAGHLSFPDAFAEMRGGELWLKNVHIAEYVHACSFAPNPDRMRKLLAHRDQIARLKRKVEEKGYTLVPLEFYLKAGRVKVALGICKGKKLFDKRAQIKARDNARELSRSLCERHH.

This sequence belongs to the SmpB family.

The protein resides in the cytoplasm. In terms of biological role, required for rescue of stalled ribosomes mediated by trans-translation. Binds to transfer-messenger RNA (tmRNA), required for stable association of tmRNA with ribosomes. tmRNA and SmpB together mimic tRNA shape, replacing the anticodon stem-loop with SmpB. tmRNA is encoded by the ssrA gene; the 2 termini fold to resemble tRNA(Ala) and it encodes a 'tag peptide', a short internal open reading frame. During trans-translation Ala-aminoacylated tmRNA acts like a tRNA, entering the A-site of stalled ribosomes, displacing the stalled mRNA. The ribosome then switches to translate the ORF on the tmRNA; the nascent peptide is terminated with the 'tag peptide' encoded by the tmRNA and targeted for degradation. The ribosome is freed to recommence translation, which seems to be the essential function of trans-translation. This chain is SsrA-binding protein, found in Treponema pallidum (strain Nichols).